The primary structure comprises 574 residues: Acetolactate synthase isozyme 3 large subunit (574 aa).

Glu51 contributes to the thiamine diphosphate binding site. FAD contacts are provided by residues Arg153, 261 to 282, and 304 to 323; these read HGTY…VGVR and DIDP…IVGD. The tract at residues 397–477 is thiamine pyrophosphate binding; the sequence is QHQMFAALYY…VLVVNLNNRY (81 aa). Mg(2+)-binding residues include Asp448 and Asn475.

The protein belongs to the TPP enzyme family. Dimer of large and small chains. Mg(2+) serves as cofactor. Thiamine diphosphate is required as a cofactor.

The enzyme catalyses 2 pyruvate + H(+) = (2S)-2-acetolactate + CO2. It functions in the pathway amino-acid biosynthesis; L-isoleucine biosynthesis; L-isoleucine from 2-oxobutanoate: step 1/4. It participates in amino-acid biosynthesis; L-valine biosynthesis; L-valine from pyruvate: step 1/4. With respect to regulation, sensitive to valine inhibition. This is Acetolactate synthase isozyme 3 large subunit (ilvI) from Escherichia coli (strain K12).